The chain runs to 406 residues: Multidrug resistance protein MdtG (406 aa).

A run of 11 helical transmembrane segments spans residues 16 to 36 (VAWL…PFLP), 56 to 76 (LVFS…GGLA), 90 to 110 (LGMA…QFLL), 113 to 133 (ALLG…ATQV), 144 to 164 (TLST…GLLA), 171 to 191 (PVFF…LFFT), 222 to 242 (LFVT…ILTL), 254 to 274 (IAFI…LSAP), 288 to 308 (ILIT…FVQT), 317 to 337 (FLLG…LVYN), and 376 to 396 (AVFC…WNSL).

This sequence belongs to the major facilitator superfamily. DHA1 family. MdtG (TC 2.A.1.2.20) subfamily.

The protein resides in the cell inner membrane. The protein is Multidrug resistance protein MdtG of Citrobacter koseri (strain ATCC BAA-895 / CDC 4225-83 / SGSC4696).